Reading from the N-terminus, the 287-residue chain is Aquaporin PIP1-2 (287 aa).

The disordered stretch occupies residues 1 to 37 (MEGKEEDVRLGANKFTERQPIGTAAQSQDKDYKEPPP). Residues 1 to 55 (MEGKEEDVRLGANKFTERQPIGTAAQSQDKDYKEPPPAPLFEPGELSSWSFYRAG) lie on the Cytoplasmic side of the membrane. A helical transmembrane segment spans residues 56–76 (IAEFVATFLFLYITILTVMGV). Over 77-89 (VKSSTKCSTVGIQ) the chain is Extracellular. A helical membrane pass occupies residues 90 to 110 (GIAWAFGGMIFALVYCTAGIS). The Cytoplasmic segment spans residues 111–133 (GGHINPAVTFGLFLARKLSLTRA). Positions 115-117 (NPA) match the NPA 1 motif. A helical transmembrane segment spans residues 134 to 154 (LFYMVMQCLGAICGAGVVKGF). The Extracellular portion of the chain corresponds to 155 to 175 (QKGLYENNGGGANVVAPGYTK). The helical transmembrane segment at 176-196 (GDGLGAEIVGTFILVYTVFSA) threads the bilayer. Topologically, residues 197–209 (TDAKRSARDSHVP) are cytoplasmic. A helical transmembrane segment spans residues 210–230 (ILAPLPIGFAVFLVHLATIPI). Residues 231 to 257 (TGTGINPARSLGAAIIYNKGHAWDDHW) lie on the Extracellular side of the membrane. Positions 236-238 (NPA) match the NPA 2 motif. A helical transmembrane segment spans residues 258–278 (IFWVGPFIGAALAALYHQVVI). Residues 279–287 (RAIPFKSRS) are Cytoplasmic-facing.

The protein belongs to the MIP/aquaporin (TC 1.A.8) family. PIP (TC 1.A.8.11) subfamily. In terms of tissue distribution, barely detectable in roots, leaves and fruits.

The protein localises to the cell membrane. In terms of biological role, water channel required to facilitate the transport of water across cell membrane; mercury-insensitive. Contributes to the tolerance to multiple abiotic stresses including salt (NaCl), cold and water deprivation, by modulating cytosolic K(+)/Na(+) ratio, maintaining osmotic balance, and reducing membrane injury (e.g. oxidative injury). The chain is Aquaporin PIP1-2 from Musa acuminata subsp. malaccensis (Wild banana).